A 206-amino-acid chain; its full sequence is Large ribosomal subunit protein uL4 (206 aa).

The disordered stretch occupies residues 49 to 73 (KTKTISEISGTTKKPFAQKGGGRAR).

It belongs to the universal ribosomal protein uL4 family. In terms of assembly, part of the 50S ribosomal subunit.

One of the primary rRNA binding proteins, this protein initially binds near the 5'-end of the 23S rRNA. It is important during the early stages of 50S assembly. It makes multiple contacts with different domains of the 23S rRNA in the assembled 50S subunit and ribosome. Its function is as follows. Forms part of the polypeptide exit tunnel. This chain is Large ribosomal subunit protein uL4, found in Paramagnetospirillum magneticum (strain ATCC 700264 / AMB-1) (Magnetospirillum magneticum).